The primary structure comprises 542 residues: uncharacterized protein (542 aa).

A run of 12 helical transmembrane segments spans residues 12–32 (LVFG…GTVL), 57–77 (FGDV…AILY), 94–114 (VIVM…SWTA), 123–143 (AAAV…AGLA), 168–188 (LFAV…AALV), 191–211 (FVVS…LVTL), 216–236 (IDAP…AFLL), 243–263 (SGVV…PTVI), 277–297 (IATF…IPGA), 313–333 (VLAL…VQAT), 358–378 (VTSW…AVPM), and 391–411 (LIIF…GTSL).

Belongs to the monovalent cation:proton antiporter 1 (CPA1) transporter (TC 2.A.36) family.

It localises to the cell membrane. This is an uncharacterized protein from Mycobacterium bovis (strain ATCC BAA-935 / AF2122/97).